The sequence spans 441 residues: UDP-N-acetylglucosamine--peptide N-acetylglucosaminyltransferase stabilizing protein GtfB (441 aa).

The protein belongs to the GtfB family. As to quaternary structure, forms a heterotetramer with 2 subunits each of GtfA and GtfB. Part of the accessory SecA2/SecY2 protein translocation apparatus.

Its subcellular location is the cell membrane. It functions in the pathway protein modification; protein glycosylation. Its function is as follows. Required for polymorphic O-glycosylation of the serine-rich repeat protein (SRRP) in this bacteria. A stabilizing protein that is part of the accessory SecA2/SecY2 system specifically required to export serine-rich repeat cell wall proteins encoded in the same operon. The GtfA-GtfB complex adds GlcNAc from UDP-GlcNAc to the substrate protein, attaching the first sugar residue. Stabilizes the glycosylation activity of GtfA. Has no N-acetylglucosaminyl transferase activity on its own. The protein is UDP-N-acetylglucosamine--peptide N-acetylglucosaminyltransferase stabilizing protein GtfB of Limosilactobacillus reuteri subsp. suis (strain ATCC 53608 / LMG 31752 / 1063) (Lactobacillus reuteri).